The sequence spans 473 residues: Aspartyl/glutamyl-tRNA(Asn/Gln) amidotransferase subunit B (473 aa).

It belongs to the GatB/GatE family. GatB subfamily. In terms of assembly, heterotrimer of A, B and C subunits.

The catalysed reaction is L-glutamyl-tRNA(Gln) + L-glutamine + ATP + H2O = L-glutaminyl-tRNA(Gln) + L-glutamate + ADP + phosphate + H(+). The enzyme catalyses L-aspartyl-tRNA(Asn) + L-glutamine + ATP + H2O = L-asparaginyl-tRNA(Asn) + L-glutamate + ADP + phosphate + 2 H(+). Functionally, allows the formation of correctly charged Asn-tRNA(Asn) or Gln-tRNA(Gln) through the transamidation of misacylated Asp-tRNA(Asn) or Glu-tRNA(Gln) in organisms which lack either or both of asparaginyl-tRNA or glutaminyl-tRNA synthetases. The reaction takes place in the presence of glutamine and ATP through an activated phospho-Asp-tRNA(Asn) or phospho-Glu-tRNA(Gln). This chain is Aspartyl/glutamyl-tRNA(Asn/Gln) amidotransferase subunit B, found in Levilactobacillus brevis (strain ATCC 367 / BCRC 12310 / CIP 105137 / JCM 1170 / LMG 11437 / NCIMB 947 / NCTC 947) (Lactobacillus brevis).